A 586-amino-acid chain; its full sequence is Proline--tRNA ligase (586 aa).

It belongs to the class-II aminoacyl-tRNA synthetase family. ProS type 1 subfamily. In terms of assembly, homodimer.

The protein resides in the cytoplasm. It carries out the reaction tRNA(Pro) + L-proline + ATP = L-prolyl-tRNA(Pro) + AMP + diphosphate. Functionally, catalyzes the attachment of proline to tRNA(Pro) in a two-step reaction: proline is first activated by ATP to form Pro-AMP and then transferred to the acceptor end of tRNA(Pro). As ProRS can inadvertently accommodate and process non-cognate amino acids such as alanine and cysteine, to avoid such errors it has two additional distinct editing activities against alanine. One activity is designated as 'pretransfer' editing and involves the tRNA(Pro)-independent hydrolysis of activated Ala-AMP. The other activity is designated 'posttransfer' editing and involves deacylation of mischarged Ala-tRNA(Pro). The misacylated Cys-tRNA(Pro) is not edited by ProRS. The protein is Proline--tRNA ligase of Leptospira biflexa serovar Patoc (strain Patoc 1 / Ames).